The primary structure comprises 467 residues: Venom prothrombin activator omicarin-C catalytic subunit (467 aa).

The N-terminal stretch at 1–20 is a signal peptide; that stretch reads MAPQLLLCLILTFLWSLPEA. Positions 21–40 are excised as a propeptide; the sequence is ESNVFLKSKVANRFLQRTKR. Positions 41-86 constitute a Gla domain; sequence ANSLFEEFRSGNIERECIEERCSKEEAREVFEDDEKTETFWNVYVD. 11 positions are modified to 4-carboxyglutamate: Glu46, Glu47, Glu54, Glu56, Glu59, Glu60, Glu65, Glu66, Glu69, Glu72, and Glu75. A disulfide bond links Cys57 and Cys62. In terms of domain architecture, EGF-like 1; calcium-binding spans 86–122; it reads DGDQCSSNPCHYRGTCKDGIGSYTCTCLFGYEGKNCE. Disulfide bonds link Cys90/Cys101, Cys95/Cys110, Cys112/Cys121, Cys129/Cys140, Cys136/Cys149, Cys151/Cys164, Cys172/Cys329, Cys216/Cys221, Cys236/Cys252, Cys377/Cys391, and Cys402/Cys430. O-linked (Hex...) serine glycosylation occurs at Ser92. An EGF-like 2 domain is found at 129–164; that stretch reads CRVDNGNCWHFCKPVQNDIQCSCAEGYLLGEDGHSC. Positions 182–209 are cleaved as a propeptide — activation peptide; the sequence is REASLPDFVQSQNATLLKKSDNPSPDIR. Residues 210-454 enclose the Peptidase S1 domain; sequence IVNGMDCKLG…FILWIKRIMR (245 aa). His251 acts as the Charge relay system in catalysis. N-linked (GlcNAc...) asparagine glycosylation is present at Asn254. The active-site Charge relay system is the Asp309. Residue Ser406 is the Charge relay system of the active site.

Belongs to the peptidase S1 family. Snake venom subfamily. In terms of assembly, heterodimer of a light and a heavy chains; disulfide-linked. Is associated with omicarin-C non-catalytic subunit (AC Q58L90) in a non-covalent manner. In terms of processing, gamma-carboxyglutamate residues are formed by vitamin K dependent carboxylation. These residues are essential for the binding of calcium. In terms of tissue distribution, expressed by the venom gland.

It localises to the secreted. It catalyses the reaction Selective cleavage of Arg-|-Thr and then Arg-|-Ile bonds in prothrombin to form thrombin.. With respect to regulation, activated by calcium and negatively charged phospholipids. Functionally, snake prothrombin activator that attacks the hemostatic system of prey. This catalytic subunit is functionally similar to blood coagulation factor Xa. It requires a non-catalytic subunit present in the venom, which is similar to coagulation factor Va, to be fully active. The polypeptide is Venom prothrombin activator omicarin-C catalytic subunit (Oxyuranus microlepidotus (Inland taipan)).